A 363-amino-acid polypeptide reads, in one-letter code: MNELLLNLVDPLHQWFLGLGDGGVVLWSVLKILLIAVPVIVSVAFYVVWERKLIGWMHVRHGPMYVGMGIFQAFADVFKLLFKEILQPSSSHKAMFIIAPLLTLAPAFAAWSVVPFDAKLVLSNANVGLLYLLAMTSLGVYGIILAGWASNSKYAFLGAMRSAAQVVSYEIAMGFALVGVMIASGSVNLSQIVFAQAGNSGFFDWFLIPLFPLFIVYWVSGVAETNRAPFDVVEGESEIVAGHMVEYSGGAFALFFLAEYANMILVSFLISIFFFGGWLSPIQGWVNADISPWIDWLWKGGWPWLLMKVFFFASAYIWFRASFPRYRYDQIMRLGWKVFIPLTIVWIAVTALMVFYGVIQKGV.

A run of 10 helical transmembrane segments spans residues 29–49 (VLKILLIAVPVIVSVAFYVVW), 62–82 (GPMYVGMGIFQAFADVFKLLF), 96–116 (FIIAPLLTLAPAFAAWSVVPF), 127–147 (VGLLYLLAMTSLGVYGIILAG), 163–183 (AAQVVSYEIAMGFALVGVMIA), 202–222 (FFDWFLIPLFPLFIVYWVSGV), 238–257 (EIVAGHMVEYSGGAFALFFL), 278–298 (WLSPIQGWVNADISPWIDWLW), 299–319 (KGGWPWLLMKVFFFASAYIWF), and 339–359 (FIPLTIVWIAVTALMVFYGVI).

The protein belongs to the complex I subunit 1 family. As to quaternary structure, NDH-1 is composed of 14 different subunits. Subunits NuoA, H, J, K, L, M, N constitute the membrane sector of the complex.

The protein resides in the cell inner membrane. The catalysed reaction is a quinone + NADH + 5 H(+)(in) = a quinol + NAD(+) + 4 H(+)(out). Functionally, NDH-1 shuttles electrons from NADH, via FMN and iron-sulfur (Fe-S) centers, to quinones in the respiratory chain. The immediate electron acceptor for the enzyme in this species is believed to be ubiquinone. Couples the redox reaction to proton translocation (for every two electrons transferred, four hydrogen ions are translocated across the cytoplasmic membrane), and thus conserves the redox energy in a proton gradient. This subunit may bind ubiquinone. The polypeptide is NADH-quinone oxidoreductase subunit H (Xanthomonas oryzae pv. oryzae (strain MAFF 311018)).